The sequence spans 1312 residues: Retinoblastoma-like protein A (1312 aa).

7 disordered regions span residues 1 to 67 (MMAH…NNEN), 168 to 231 (SSSS…KNSS), 336 to 359 (HNYN…NNNN), 536 to 611 (NNNN…IYGT), 987 to 1023 (NNNN…NNNN), 1168 to 1236 (KKND…NNTE), and 1249 to 1312 (EESP…RLKS). Positions 10 to 67 (TNINTKTTAPTTTTTEQQPEQQQQQPEQQQQEKQNNNNNNNNNNNNNNNINNNENNEN) are enriched in low complexity. Residues 36–117 (EQQQQEKQNN…TSSALNVDQD (82 aa)) are a coiled coil. The span at 168-179 (SSSSFQPDNNSK) shows a compositional bias: polar residues. Residues 180 to 189 (IKGRKIRKTN) show a composition bias toward basic residues. Residues 195 to 230 (NNDSNEEEEETTTDTEEEEEEDTLLNENNNSINKNS) are a coiled coil. Positions 198–218 (SNEEEEETTTDTEEEEEEDTL) are enriched in acidic residues. Low complexity-rich tracts occupy residues 219–231 (LNEN…KNSS), 337–359 (NYNN…NNNN), and 536–595 (NNNN…SSSS). 3 stretches are compositionally biased toward low complexity: residues 1185-1234 (NNNN…NNNN), 1251-1275 (SPST…NNNK), and 1286-1305 (SPSS…SSSG).

It belongs to the retinoblastoma protein (RB) family.

The protein localises to the nucleus. In terms of biological role, key regulator of entry into cell division. Directly involved in heterochromatin formation by maintaining overall chromatin structure and, in particular, that of constitutive heterochromatin by stabilizing histone methylation. Controls histone H4 'Lys-20' trimethylation. Probably acts as a transcription repressor by recruiting chromatin-modifying enzymes to promoters. Plays a dual role, regulating cell-cycle progression and transcriptional events leading to terminal differentiation. In the absence of a G1 phase, functions in late G2 controlling the expression of both S-phase and mitotic genes. Controls stalk/spore preference by suppressing the DIF response in cells destined for the spore pathway. DIF is a chlorinated hydroxyphenone made by cells of spore pathway that promotes stalk differentiation. This Dictyostelium discoideum (Social amoeba) protein is Retinoblastoma-like protein A.